We begin with the raw amino-acid sequence, 107 residues long: Metallothionein-1 (107 aa).

It belongs to the metallothionein superfamily. Type 7 family.

In terms of biological role, the metallothioneins are involved in the cellular sequestration of toxic metal ions. Binds 12 cadmium ions per molecule. The polypeptide is Metallothionein-1 (Tetrahymena thermophila).